Here is a 163-residue protein sequence, read N- to C-terminus: Protein-export protein SecB (163 aa).

Belongs to the SecB family. As to quaternary structure, homotetramer, a dimer of dimers. One homotetramer interacts with 1 SecA dimer.

Its subcellular location is the cytoplasm. One of the proteins required for the normal export of preproteins out of the cell cytoplasm. It is a molecular chaperone that binds to a subset of precursor proteins, maintaining them in a translocation-competent state. It also specifically binds to its receptor SecA. This Methylibium petroleiphilum (strain ATCC BAA-1232 / LMG 22953 / PM1) protein is Protein-export protein SecB.